A 786-amino-acid polypeptide reads, in one-letter code: UPF0313 protein SO_0311 (786 aa).

A Radical SAM core domain is found at 371 to 649 (AYDMIKTSIN…KALLRYHDPA (279 aa)). The [4Fe-4S] cluster site is built by cysteine 385, cysteine 389, and cysteine 392. 2 disordered regions span residues 669–688 (NSPN…PKWM) and 698–786 (LTRF…QQAK). Composition is skewed to basic and acidic residues over residues 679-688 (GRNERGPKWM) and 706-717 (FDERKGKGDAKG). Residues 718-731 (KPSASKPKGPKSGA) are compositionally biased toward low complexity. A compositionally biased stretch (polar residues) spans 732–741 (NAPQSQQPKT).

It belongs to the UPF0313 family. [4Fe-4S] cluster serves as cofactor.

The protein is UPF0313 protein SO_0311 of Shewanella oneidensis (strain ATCC 700550 / JCM 31522 / CIP 106686 / LMG 19005 / NCIMB 14063 / MR-1).